The primary structure comprises 189 residues: Ras-like protein 1 (189 aa).

10–17 (GGGGVGKS) is a GTP binding site. An Effector region motif is present at residues 32-40 (YDPTIEDSY). Residues 57–61 (DTAGQ) and 116–119 (NKCD) contribute to the GTP site. C186 is modified (cysteine methyl ester). The S-geranylgeranyl cysteine moiety is linked to residue C186. The propeptide at 187–189 (LLL) is removed in mature form.

The protein belongs to the small GTPase superfamily. Ras family.

It is found in the cell membrane. The catalysed reaction is GTP + H2O = GDP + phosphate + H(+). Its function is as follows. Ras proteins bind GDP/GTP and possess intrinsic GTPase activity. This Physarum polycephalum (Slime mold) protein is Ras-like protein 1 (RAS1).